Here is a 448-residue protein sequence, read N- to C-terminus: Selenide, water dikinase 2 (448 aa).

Residue A2 is modified to N-acetylalanine. The residue at position 46 (S46) is a Phosphoserine. U60 is an active-site residue. U60 is a non-standard amino acid (selenocysteine). An ATP-binding site is contributed by K63. The disordered stretch occupies residues 85-107; the sequence is LGRGLVGGQEEASQEAGLPAGAG. Phosphoserine is present on S97. ATP contacts are provided by residues 118–120, D138, D161, and 212–215; these read GMD and GGQT. A Mg(2+)-binding site is contributed by D120. D161 serves as a coordination point for Mg(2+). A Mg(2+)-binding site is contributed by D316.

It belongs to the selenophosphate synthase 1 family. Class I subfamily. In terms of assembly, homodimer. The cofactor is Mg(2+). In terms of processing, truncated SEPHS2 proteins produced by failed UGA/Sec decoding are ubiquitinated by the CRL2(KLHDC3) complex, which recognizes the glycine (Gly) at the C-terminus of truncated SEPHS2 proteins.

The enzyme catalyses hydrogenselenide + ATP + H2O = selenophosphate + AMP + phosphate + 2 H(+). In terms of biological role, synthesizes selenophosphate from selenide and ATP. This chain is Selenide, water dikinase 2 (SEPHS2), found in Homo sapiens (Human).